Consider the following 148-residue polypeptide: Snaclec 8 (148 aa).

Positions 1 to 23 are cleaved as a signal peptide; it reads MGRFIFVSFSLLVVFFSLSGTEA. In terms of domain architecture, C-type lectin spans 34–148; that stretch reads YDQNCYKAFE…DTQFRLQEPG (115 aa).

The protein belongs to the snaclec family. Heterodimer; disulfide-linked. In terms of processing, contains disulfide bonds. As to expression, expressed by the venom gland.

The protein localises to the secreted. Its function is as follows. Interferes with one step of hemostasis (modulation of platelet aggregation, or coagulation cascade, for example). In Echis carinatus sochureki (Saw-scaled viper), this protein is Snaclec 8.